The primary structure comprises 220 residues: Homeobox-leucine zipper protein ATHB-21 (220 aa).

A disordered region spans residues 26-48 (VPQQGGEAKPTRRRKRKSKSVVV). The homeobox DNA-binding region spans 58-117 (GWFRKRKLSDEQVRMLEISFEDDHKLESERKDRLASELGLDPRQVAVWFQNRRARWKNKR). Residues 118–146 (VEDEYTKLKNAYETTVVEKCRLDSEVIHL) form a leucine-zipper region.

The protein belongs to the HD-ZIP homeobox family. Class I subfamily. In terms of tissue distribution, widely expressed.

Its subcellular location is the nucleus. In terms of biological role, probable transcription factor. The sequence is that of Homeobox-leucine zipper protein ATHB-21 (ATHB-21) from Arabidopsis thaliana (Mouse-ear cress).